The primary structure comprises 403 residues: Multifunctional CCA protein (403 aa).

Positions 8 and 11 each coordinate ATP. 2 residues coordinate CTP: Gly8 and Arg11. Mg(2+) is bound by residues Asp21 and Asp23. Residues Arg91, Arg137, and Arg140 each coordinate ATP. Residues Arg91, Arg137, and Arg140 each coordinate CTP. Residues 228–329 (TGIHTLMVAK…LKVLGLLDVW (102 aa)) enclose the HD domain.

Belongs to the tRNA nucleotidyltransferase/poly(A) polymerase family. Bacterial CCA-adding enzyme type 1 subfamily. As to quaternary structure, monomer. Can also form homodimers and oligomers. Mg(2+) is required as a cofactor. It depends on Ni(2+) as a cofactor.

It catalyses the reaction a tRNA precursor + 2 CTP + ATP = a tRNA with a 3' CCA end + 3 diphosphate. The catalysed reaction is a tRNA with a 3' CCA end + 2 CTP + ATP = a tRNA with a 3' CCACCA end + 3 diphosphate. In terms of biological role, catalyzes the addition and repair of the essential 3'-terminal CCA sequence in tRNAs without using a nucleic acid template. Adds these three nucleotides in the order of C, C, and A to the tRNA nucleotide-73, using CTP and ATP as substrates and producing inorganic pyrophosphate. tRNA 3'-terminal CCA addition is required both for tRNA processing and repair. Also involved in tRNA surveillance by mediating tandem CCA addition to generate a CCACCA at the 3' terminus of unstable tRNAs. While stable tRNAs receive only 3'-terminal CCA, unstable tRNAs are marked with CCACCA and rapidly degraded. The protein is Multifunctional CCA protein of Vibrio cholerae serotype O1 (strain ATCC 39541 / Classical Ogawa 395 / O395).